The sequence spans 630 residues: Cyclin-T1-2 (630 aa).

The segment covering 288–297 has biased composition (low complexity); the sequence is QSSLSVSSSS. Disordered stretches follow at residues 288–313 and 410–439; these read QSSL…DSSQ and RSGD…VEPP. A compositionally biased stretch (polar residues) spans 421–439; it reads GGSSLTDVDSKSTQSVEPP.

Belongs to the cyclin family. Cyclin T subfamily.

The sequence is that of Cyclin-T1-2 (CYCT1_2) from Oryza sativa subsp. japonica (Rice).